A 658-amino-acid polypeptide reads, in one-letter code: Carnitine O-palmitoyltransferase 2, mitochondrial (658 aa).

A mitochondrion-targeting transit peptide spans 1–25 (MVPRLLLRAWPRGPAVGPGAPSRPL). The Mitochondrial matrix segment spans residues 26–178 (SAGSGPGQYL…GLLEPEVFHL (153 aa)). Lys69 bears the N6-succinyllysine mark. Residue Lys79 is modified to N6-acetyllysine. Position 85 is an N6-succinyllysine (Lys85). An intramembrane region (note=Mitochondrial inner membrane) is located at residues 179–208 (NPAKSDTITFKRLIRFVPSSLSWYGAYLVN). Topologically, residues 209 to 658 (AYPLDMSQYF…DALEGKSIKS (450 aa)) are mitochondrial matrix. The residue at position 239 (Lys239) is an N6-acetyllysine; alternate. At Lys239 the chain carries N6-succinyllysine; alternate. Lys305 is subject to N6-acetyllysine. The active-site Proton acceptor is His372. An N6-succinyllysine mark is found at Lys424 and Lys439. Residue 452 to 464 (GKEFLKKQKLSPD) coordinates CoA. Positions 486, 488, and 499 each coordinate (R)-carnitine. Lys510 and Lys544 each carry N6-acetyllysine; alternate. An N6-succinyllysine; alternate mark is found at Lys510 and Lys544.

This sequence belongs to the carnitine/choline acetyltransferase family.

The protein resides in the mitochondrion inner membrane. The catalysed reaction is (R)-carnitine + hexadecanoyl-CoA = O-hexadecanoyl-(R)-carnitine + CoA. It carries out the reaction octanoyl-CoA + (R)-carnitine = O-octanoyl-(R)-carnitine + CoA. The enzyme catalyses decanoyl-CoA + (R)-carnitine = O-decanoyl-(R)-carnitine + CoA. It catalyses the reaction dodecanoyl-CoA + (R)-carnitine = O-dodecanoyl-R-carnitine + CoA. The catalysed reaction is tetradecanoyl-CoA + (R)-carnitine = O-tetradecanoyl-(R)-carnitine + CoA. It carries out the reaction (R)-carnitine + octadecanoyl-CoA = O-octadecanoyl-(R)-carnitine + CoA. The enzyme catalyses eicosanoyl-CoA + (R)-carnitine = O-eicosanoyl-(R)-carnitine + CoA. It catalyses the reaction (9Z)-tetradecenoyl-CoA + (R)-carnitine = O-(9Z)-tetradecenoyl-(R)-carnitine + CoA. The catalysed reaction is (5Z)-tetradecenoyl-CoA + (R)-carnitine = O-(5Z)-tetradecenoyl-(R)-carnitine + CoA. It carries out the reaction (R)-carnitine + (9Z)-octadecenoyl-CoA = O-(9Z)-octadecenoyl-(R)-carnitine + CoA. The enzyme catalyses 4,8-dimethylnonanoyl-CoA + (R)-carnitine = O-4,8-dimethylnonanoyl-(R)-carnitine + CoA. It participates in lipid metabolism; fatty acid beta-oxidation. With respect to regulation, inhibited by trans-2-hexadecanoyl-CoA. Functionally, involved in the intramitochondrial synthesis of acylcarnitines from accumulated acyl-CoA metabolites. Reconverts acylcarnitines back into the respective acyl-CoA esters that can then undergo beta-oxidation, an essential step for the mitochondrial uptake of long-chain fatty acids and their subsequent beta-oxidation in the mitochondrion. Active with medium (C8-C12) and long-chain (C14-C18) acyl-CoA esters. This chain is Carnitine O-palmitoyltransferase 2, mitochondrial, found in Homo sapiens (Human).